Here is a 96-residue protein sequence, read N- to C-terminus: Small ribosomal subunit protein bS6 (96 aa).

Belongs to the bacterial ribosomal protein bS6 family.

Binds together with bS18 to 16S ribosomal RNA. The sequence is that of Small ribosomal subunit protein bS6 from Bacillus thuringiensis subsp. konkukian (strain 97-27).